The sequence spans 304 residues: Homoserine dehydrogenase (304 aa).

NADP(+) is bound by residues Tyr-8, Asn-10, Val-11, Arg-38, Arg-39, and Ser-73. Residue Tyr-8 coordinates NADPH. Positions 11 and 38 each coordinate NADPH. Val-11 contributes to the NAD(+) binding site. NADPH is bound by residues Ser-73, Ser-74, Thr-100, and Lys-102. Ser-73 contacts NAD(+). Positions 100 and 102 each coordinate NADP(+). Val-129 and Thr-133 together coordinate Na(+). NADP(+)-binding residues include Gly-182 and Glu-185. Residues Glu-185 and Asp-196 each coordinate L-homoserine. Lys-200 serves as the catalytic Proton donor. Gly-284 provides a ligand contact to NADP(+). Position 284 (Gly-284) interacts with NADPH. Gly-284 is an NAD(+) binding site.

It belongs to the homoserine dehydrogenase family. As to quaternary structure, homodimer. A metal cation serves as cofactor. Post-translationally, the enzyme is activated by reductive cleavage of the interchain disulfide bond between the two subunits.

The catalysed reaction is L-homoserine + NADP(+) = L-aspartate 4-semialdehyde + NADPH + H(+). The enzyme catalyses L-homoserine + NAD(+) = L-aspartate 4-semialdehyde + NADH + H(+). It functions in the pathway amino-acid biosynthesis; L-methionine biosynthesis via de novo pathway; L-homoserine from L-aspartate: step 3/3. Its pathway is amino-acid biosynthesis; L-threonine biosynthesis; L-threonine from L-aspartate: step 3/5. Its activity is regulated as follows. Inhibited by cysteine. Its function is as follows. Catalyzes the conversion of L-aspartate-beta-semialdehyde (L-Asa) to L-homoserine (L-Hse), the third step in the biosynthesis of threonine and methionine from aspartate. The sequence is that of Homoserine dehydrogenase from Sulfurisphaera tokodaii (strain DSM 16993 / JCM 10545 / NBRC 100140 / 7) (Sulfolobus tokodaii).